Here is a 488-residue protein sequence, read N- to C-terminus: 3-octaprenyl-4-hydroxybenzoate carboxy-lyase (488 aa).

Asn-172 contributes to the Mn(2+) binding site. Prenylated FMN is bound by residues 175 to 177, 189 to 191, and 194 to 195; these read IYR, RWL, and RG. Glu-238 serves as a coordination point for Mn(2+). Asp-287 serves as the catalytic Proton donor.

This sequence belongs to the UbiD family. In terms of assembly, homohexamer. It depends on prenylated FMN as a cofactor. The cofactor is Mn(2+).

It localises to the cell membrane. It carries out the reaction a 4-hydroxy-3-(all-trans-polyprenyl)benzoate + H(+) = a 2-(all-trans-polyprenyl)phenol + CO2. It participates in cofactor biosynthesis; ubiquinone biosynthesis. Catalyzes the decarboxylation of 3-octaprenyl-4-hydroxy benzoate to 2-octaprenylphenol, an intermediate step in ubiquinone biosynthesis. The protein is 3-octaprenyl-4-hydroxybenzoate carboxy-lyase of Pseudomonas putida (strain W619).